Here is a 142-residue protein sequence, read N- to C-terminus: Large ribosomal subunit protein uL11 (142 aa).

Belongs to the universal ribosomal protein uL11 family. As to quaternary structure, part of the ribosomal stalk of the 50S ribosomal subunit. Interacts with L10 and the large rRNA to form the base of the stalk. L10 forms an elongated spine to which L12 dimers bind in a sequential fashion forming a multimeric L10(L12)X complex. One or more lysine residues are methylated.

In terms of biological role, forms part of the ribosomal stalk which helps the ribosome interact with GTP-bound translation factors. The sequence is that of Large ribosomal subunit protein uL11 from Rhodopseudomonas palustris (strain BisB5).